Consider the following 199-residue polypeptide: dTTP/UTP pyrophosphatase (199 aa).

The active-site Proton acceptor is the Asp75.

This sequence belongs to the Maf family. YhdE subfamily. The cofactor is a divalent metal cation.

The protein resides in the cytoplasm. It carries out the reaction dTTP + H2O = dTMP + diphosphate + H(+). The catalysed reaction is UTP + H2O = UMP + diphosphate + H(+). Functionally, nucleoside triphosphate pyrophosphatase that hydrolyzes dTTP and UTP. May have a dual role in cell division arrest and in preventing the incorporation of modified nucleotides into cellular nucleic acids. The protein is dTTP/UTP pyrophosphatase of Methylobacillus flagellatus (strain ATCC 51484 / DSM 6875 / VKM B-1610 / KT).